Reading from the N-terminus, the 132-residue chain is Small ribosomal subunit protein uS8 (132 aa).

Belongs to the universal ribosomal protein uS8 family. Part of the 30S ribosomal subunit. Contacts proteins S5 and S12.

Functionally, one of the primary rRNA binding proteins, it binds directly to 16S rRNA central domain where it helps coordinate assembly of the platform of the 30S subunit. This is Small ribosomal subunit protein uS8 from Ehrlichia ruminantium (strain Welgevonden).